Here is a 535-residue protein sequence, read N- to C-terminus: MLTSWRTISLLQKTTSRFIKRSKTYADVRYNSQALQNHGVPGNKRKWMKRFVFVGAAGIGVYAWDRVYNAHALTRSIRTVYTASIIAADYKLNFSEKKADKIDALHQRVAQRLFKTIYKNGGLYIKMGQIIAMQSNNLPEAYGKAFQGMFDNAPQVEWEELQDIFKEQYGRPVEEVFASIEKRAAASASIAQVHRAVLPSGEKVAVKIQKPDVAKQMSWDLLVYKYMMYVYDKWIFHIPLYFTVDYVSERLRSEVDFTTEANNSEHAREGVEETDYLRDKIYIPKVYKEISGKRVMVTEWADGIPLYDQTALSEAGMSKKEILTNLFRFLAFQMFHSKQVHCDPHPGNILVRKNQAGLCQTVILDHGLYVFESEKFRKEFALLFTAAYSLDKKSILQVMDAWGIGQPELFANRMLNIPMDEEQPHTGEKIISKKEAFQQQLAERKKFIGFLQDCTRLPKELLMLGRCLMLIQKNNQNFGYPVNSIAVMAKVADKYTTDKPSPTWYQRLLSPIFWVFQHLFYPGNFRLPELTNDKK.

Belongs to the protein kinase superfamily. ADCK protein kinase family.

In Schizosaccharomyces pombe (strain 972 / ATCC 24843) (Fission yeast), this protein is ABC1 family protein C10F6.14c.